The primary structure comprises 165 residues: Small ribosomal subunit protein uS5 (165 aa).

An S5 DRBM domain is found at 13–76; that stretch reads LEEKVLVVNR…EAARKNLITI (64 aa).

It belongs to the universal ribosomal protein uS5 family. In terms of assembly, part of the 30S ribosomal subunit. Contacts proteins S4 and S8.

Its function is as follows. With S4 and S12 plays an important role in translational accuracy. In terms of biological role, located at the back of the 30S subunit body where it stabilizes the conformation of the head with respect to the body. The sequence is that of Small ribosomal subunit protein uS5 from Chlamydia felis (strain Fe/C-56) (Chlamydophila felis).